The primary structure comprises 344 residues: UDP-N-acetylenolpyruvoylglucosamine reductase (344 aa).

An FAD-binding PCMH-type domain is found at 19–189 (INVTAKKIIF…IAVGIKIKKN (171 aa)). Arginine 165 is an active-site residue. Residue serine 235 is the Proton donor of the active site. Glutamate 331 is a catalytic residue.

It belongs to the MurB family. The cofactor is FAD.

It is found in the cytoplasm. The catalysed reaction is UDP-N-acetyl-alpha-D-muramate + NADP(+) = UDP-N-acetyl-3-O-(1-carboxyvinyl)-alpha-D-glucosamine + NADPH + H(+). The protein operates within cell wall biogenesis; peptidoglycan biosynthesis. Functionally, cell wall formation. This chain is UDP-N-acetylenolpyruvoylglucosamine reductase, found in Buchnera aphidicola subsp. Schizaphis graminum (strain Sg).